Reading from the N-terminus, the 384-residue chain is 1-deoxy-D-xylulose 5-phosphate reductoisomerase (384 aa).

Threonine 10, glycine 11, serine 12, isoleucine 13, glycine 36, lysine 37, asparagine 38, and asparagine 121 together coordinate NADPH. Lysine 122 provides a ligand contact to 1-deoxy-D-xylulose 5-phosphate. Glutamate 123 serves as a coordination point for NADPH. Residue aspartate 147 coordinates Mn(2+). 1-deoxy-D-xylulose 5-phosphate contacts are provided by serine 148, glutamate 149, serine 173, and histidine 196. Residue glutamate 149 coordinates Mn(2+). Residue glycine 202 coordinates NADPH. 4 residues coordinate 1-deoxy-D-xylulose 5-phosphate: serine 209, asparagine 214, lysine 215, and glutamate 218. Mn(2+) is bound at residue glutamate 218.

Belongs to the DXR family. Mg(2+) serves as cofactor. It depends on Mn(2+) as a cofactor.

The catalysed reaction is 2-C-methyl-D-erythritol 4-phosphate + NADP(+) = 1-deoxy-D-xylulose 5-phosphate + NADPH + H(+). Its pathway is isoprenoid biosynthesis; isopentenyl diphosphate biosynthesis via DXP pathway; isopentenyl diphosphate from 1-deoxy-D-xylulose 5-phosphate: step 1/6. Its function is as follows. Catalyzes the NADPH-dependent rearrangement and reduction of 1-deoxy-D-xylulose-5-phosphate (DXP) to 2-C-methyl-D-erythritol 4-phosphate (MEP). This is 1-deoxy-D-xylulose 5-phosphate reductoisomerase from Exiguobacterium sibiricum (strain DSM 17290 / CCUG 55495 / CIP 109462 / JCM 13490 / 255-15).